The following is a 459-amino-acid chain: Methylenetetrahydrofolate--tRNA-(uracil-5-)-methyltransferase TrmFO (459 aa).

Residue Gly26 to Gly31 participates in FAD binding.

The protein belongs to the MnmG family. TrmFO subfamily. FAD is required as a cofactor.

The protein localises to the cytoplasm. The enzyme catalyses uridine(54) in tRNA + (6R)-5,10-methylene-5,6,7,8-tetrahydrofolate + NADH + H(+) = 5-methyluridine(54) in tRNA + (6S)-5,6,7,8-tetrahydrofolate + NAD(+). The catalysed reaction is uridine(54) in tRNA + (6R)-5,10-methylene-5,6,7,8-tetrahydrofolate + NADPH + H(+) = 5-methyluridine(54) in tRNA + (6S)-5,6,7,8-tetrahydrofolate + NADP(+). Its function is as follows. Catalyzes the folate-dependent formation of 5-methyl-uridine at position 54 (M-5-U54) in all tRNAs. In Synechococcus sp. (strain JA-2-3B'a(2-13)) (Cyanobacteria bacterium Yellowstone B-Prime), this protein is Methylenetetrahydrofolate--tRNA-(uracil-5-)-methyltransferase TrmFO.